Here is a 954-residue protein sequence, read N- to C-terminus: Patched domain-containing protein 3 (954 aa).

A compositionally biased stretch (basic and acidic residues) spans 1–20; it reads MPWVEPKPRPGPEQKPKLTK. Residues 1-103 are disordered; it reads MPWVEPKPRP…APLPEEETPE (103 aa). The span at 42 to 57 shows a compositional bias: pro residues; the sequence is QPPPGPLAPPKSPEPS. The segment covering 90–102 has biased composition (acidic residues); the sequence is ELDDAPLPEEETP. A helical transmembrane segment spans residues 139–159; that stretch reads WIFLLAPLMLTAALGTGFLYL. N-linked (GlcNAc...) asparagine glycans are attached at residues Asn192, Asn275, and Asn279. 7 consecutive transmembrane segments (helical) span residues 297–317, 383–403, 423–443, 447–467, 486–506, 520–540, and 603–623; these read LTGFFGGYILGGSLGMGQLLL, VIPVFHLAYILIILFAVTSCF, FLAVVSGFGLLLHIGVPFVII, SPFLILGVGVDDMFIMISAWH, AAVSITITTITNILALYTGIM, GMTLLFCYFYNITCFGAFMAL, and YFVVFIYVLYIISSIYGCFHV. The SSD domain maps to 383 to 540; that stretch reads VIPVFHLAYI…ITCFGAFMAL (158 aa). Residues Asn678, Asn692, and Asn737 are each glycosylated (N-linked (GlcNAc...) asparagine). 5 helical membrane passes run 804–824, 826–846, 858–878, 894–914, and 927–947; these read VLVASAAMFIVSLLLIPYPLC, LWVTFAIGSVIVGVTGFMAFW, LVICIGFSFDFSVHISYAFVS, LLGYPVLQSAISTIIGVCVLA, and IMFLVMIFGAAHGLIFIPVFL.

It belongs to the patched family. In terms of tissue distribution, expressed in germ cells of the testis (at protein level). Detected in blood lymph, colon, small intestine, ovary, testis, prostate, thymus and spleen with highest levels in testis.

The protein resides in the cell projection. Its subcellular location is the cilium. The protein localises to the flagellum membrane. It localises to the endoplasmic reticulum membrane. May play a role in sperm development or sperm function. However, does not appear to have an essential role in spermatogenesis or male fertility. The chain is Patched domain-containing protein 3 (PTCHD3) from Homo sapiens (Human).